Consider the following 1055-residue polypeptide: Activated CDC42 kinase 1 (1055 aa).

The tract at residues 1-110 (MQPEEGTGWL…PSPTPGSLPG (110 aa)) is SAM-like domain. The tract at residues 91–110 (SQHSQSTFRKPSPTPGSLPG) is disordered. Residue threonine 113 is modified to Phosphothreonine. The 260-residue stretch at 126–385 (LRLLEKLGDG…PTFVALRDFL (260 aa)) folds into the Protein kinase domain. Residues 132-140 (LGDGSFGVV) and lysine 158 contribute to the ATP site. The Proton acceptor role is filled by aspartate 252. A Phosphotyrosine; by SRC and autocatalysis modification is found at tyrosine 284. Positions 388-448 (AQPTDMRALQ…PRNVVTSVAG (61 aa)) constitute an SH3 domain. A CRIB domain is found at 454 to 466 (ISQPLQNSFIHTG). Positions 505-548 (RPTQHLGRVKREPPPRPPQPAIFTQKTTYDPVSEDPDPLSSDFK) are disordered. A phosphotyrosine mark is found at proline 518 and tyrosine 533. The required for interaction with SRC stretch occupies residues 638 to 667 (DWDARPLPPPPAYDDVAQDEDDFEVCSINS). The segment at 647-650 (PPAY) is required for interaction with NEDD4. Positions 737–855 (TGQLTPSPTP…QVIQAPGPRA (119 aa)) are disordered. Residues 748 to 891 (GDDKPQVPPR…PYLERYQRFL (144 aa)) are EBD domain. Pro residues-rich tracts occupy residues 753 to 764 (QVPPRVPIPPRP) and 787 to 798 (PASPPRVPPREP). The segment covering 817–827 (PLPHRLSSSPG) has biased composition (low complexity). A Phosphotyrosine modification is found at tyrosine 842. An Omega-N-methylarginine modification is found at arginine 854. 2 positions are modified to phosphotyrosine: tyrosine 874 and tyrosine 887. Phosphoserine is present on serine 896. Residues 896–952 (SPEEPAALPVPPLLPPPSTPAPAAPTATVRPMPQAAPDPKANFSTNNSNPGARPPSL) are disordered. A compositionally biased stretch (pro residues) spans 903 to 918 (LPVPPLLPPPSTPAPA). In terms of domain architecture, UBA spans 973–1013 (PADKVQMLQAMVHGVTTEECQAALQSHSWSVQRAAQYLKVE).

Belongs to the protein kinase superfamily. Tyr protein kinase family. In terms of assembly, homodimer. Interacts with CSPG4 (activated). Interacts with MERTK (activated); stimulates autophosphorylation. May interact (phosphorylated) with HSP90AB1; maintains kinase activity. Interacts with NPHP1. Interacts with SNX9 (via SH3 domain). Interacts with SRC (via SH2 and SH3 domain). Part of a collagen stimulated complex involved in cell migration composed of CDC42, CRK, TNK2 and BCAR1/p130cas. Interacts with BCAR1/p130cas via SH3 domains. Forms complexes with GRB2 and numerous receptor tyrosine kinases (RTK) including LTK, AXL or PDGFRL, in which GRB2 promotes RTK recruitment by TNK2. Interacts with CDC42. Interacts with EGFR, and this interaction is dependent on EGF stimulation and kinase activity of EGFR. Interacts (via kinase domain) with AKT1. Interacts with NEDD4 (via WW3 domain). NEDD4L and EGF promote association with NEDD4. It depends on Mg(2+) as a cofactor. Autophosphorylation regulates kinase activity. Phosphorylation on Tyr-533 is required for interaction with SRC and is observed during association with clathrin-coated pits. Post-translationally, polyubiquitinated by NEDD4 and NEDD4L. Degradation can be induced by EGF and is lysosome-dependent. As to expression, ubiquitously present in all tissues tested. Highly expressed in the adult central nervous system (CNS); hippocampus, neocortex, and cerebellum, both at dendritic spines and presynaptic axon terminals. Levels are strongly increased during enhanced neural activity.

Its subcellular location is the cell membrane. It is found in the nucleus. The protein localises to the endosome. The protein resides in the cell junction. It localises to the adherens junction. Its subcellular location is the cytoplasmic vesicle membrane. It is found in the cytoplasmic vesicle. The protein localises to the clathrin-coated vesicle. The protein resides in the membrane. It localises to the clathrin-coated pit. Its subcellular location is the cytoplasm. It is found in the cytosol. The enzyme catalyses L-tyrosyl-[protein] + ATP = O-phospho-L-tyrosyl-[protein] + ADP + H(+). It catalyses the reaction L-seryl-[protein] + ATP = O-phospho-L-seryl-[protein] + ADP + H(+). It carries out the reaction L-threonyl-[protein] + ATP = O-phospho-L-threonyl-[protein] + ADP + H(+). Its function is as follows. Non-receptor tyrosine-protein and serine/threonine-protein kinase that is implicated in cell spreading and migration, cell survival, cell growth and proliferation. Transduces extracellular signals to cytosolic and nuclear effectors. Phosphorylates AKT1, AR, MCF2, WASL and WWOX. Implicated in trafficking and clathrin-mediated endocytosis through binding to epidermal growth factor receptor (EGFR) and clathrin. Binds to both poly- and mono-ubiquitin and regulates ligand-induced degradation of EGFR, thereby contributing to the accumulation of EGFR at the limiting membrane of early endosomes. Downstream effector of CDC42 which mediates CDC42-dependent cell migration via phosphorylation of BCAR1. May be involved both in adult synaptic function and plasticity and in brain development. Activates AKT1 by phosphorylating it on 'Tyr-176'. Phosphorylates AR on 'Tyr-267' and 'Tyr-363' thereby promoting its recruitment to androgen-responsive enhancers (AREs). Phosphorylates WWOX on 'Tyr-287'. Phosphorylates MCF2, thereby enhancing its activity as a guanine nucleotide exchange factor (GEF) toward Rho family proteins. Contributes to the control of AXL receptor levels. Confers metastatic properties on cancer cells and promotes tumor growth by negatively regulating tumor suppressor such as WWOX and positively regulating pro-survival factors such as AKT1 and AR. This is Activated CDC42 kinase 1 (Tnk2) from Mus musculus (Mouse).